The sequence spans 473 residues: Serine palmitoyltransferase 1 (473 aa).

Over 1-15 (MATATEQWVLVEMVQ) the chain is Lumenal. Positions 1 to 66 (MATATEQWVL…KEELIEEWQP (66 aa)) are interaction with SPTLC2. Residues 16-36 (ALYEAPAYHLILEGILILWII) traverse the membrane as a helical segment. Residues 37-473 (RLLFSKTYKL…IKEVAQAVLL (437 aa)) are Cytoplasmic-facing. The residue at position 164 (tyrosine 164) is a Phosphotyrosine; by ABL.

Belongs to the class-II pyridoxal-phosphate-dependent aminotransferase family. As to quaternary structure, component of the serine palmitoyltransferase (SPT) complex, which is also composed of SPTLC2 or SPTLC3 and SPTSSA or SPTSSB. The heterodimer consisting of SPTLC1 and SPTLC2/SPTLC3 forms the catalytic core of the enzyme, while SPTSSA or SPTSSB subunits determine substrate specificity. SPT also interacts with ORMDL proteins, especially ORMDL3, which negatively regulate SPT activity in the presence of ceramides. Forms dimers of heterodimers with SPTLC2. Interacts with RTN4 (isoform B). Pyridoxal 5'-phosphate is required as a cofactor. Post-translationally, phosphorylation at Tyr-164 inhibits activity and promotes cell survival. As to expression, widely expressed. Not detected in small intestine.

The protein localises to the endoplasmic reticulum membrane. The catalysed reaction is L-serine + hexadecanoyl-CoA + H(+) = 3-oxosphinganine + CO2 + CoA. The enzyme catalyses octadecanoyl-CoA + L-serine + H(+) = 3-oxoeicosasphinganine + CO2 + CoA. It catalyses the reaction tetradecanoyl-CoA + L-serine + H(+) = 3-oxohexadecasphinganine + CO2 + CoA. It carries out the reaction dodecanoyl-CoA + L-serine + H(+) = 3-oxotetradecasphinganine + CO2 + CoA. The protein operates within lipid metabolism; sphingolipid metabolism. Its activity is regulated as follows. SPT complex catalytic activity is negatively regulated by ORMDL proteins, including ORMDL3, in the presence of ceramides. This mechanism allows to maintain ceramide levels at sufficient concentrations for the production of complex sphingolipids, but which prevents the accumulation of ceramides to levels that trigger apoptosis. Its function is as follows. Component of the serine palmitoyltransferase multisubunit enzyme (SPT) that catalyzes the initial and rate-limiting step in sphingolipid biosynthesis by condensing L-serine and activated acyl-CoA (most commonly palmitoyl-CoA) to form long-chain bases. The SPT complex is also composed of SPTLC2 or SPTLC3 and SPTSSA or SPTSSB. Within this complex, the heterodimer with SPTLC2 or SPTLC3 forms the catalytic core. The composition of the serine palmitoyltransferase (SPT) complex determines the substrate preference. The SPTLC1-SPTLC2-SPTSSA complex shows a strong preference for C16-CoA substrate, while the SPTLC1-SPTLC3-SPTSSA isozyme uses both C14-CoA and C16-CoA as substrates, with a slight preference for C14-CoA. The SPTLC1-SPTLC2-SPTSSB complex shows a strong preference for C18-CoA substrate, while the SPTLC1-SPTLC3-SPTSSB isozyme displays an ability to use a broader range of acyl-CoAs, without apparent preference. Required for adipocyte cell viability and metabolic homeostasis. In Homo sapiens (Human), this protein is Serine palmitoyltransferase 1 (SPTLC1).